Here is a 270-residue protein sequence, read N- to C-terminus: L-cystine-binding protein TcyK (270 aa).

The signal sequence occupies residues 1–20; sequence MKTKTAFMAILFSLITVLSA. Residue Cys21 is the site of N-palmitoyl cysteine attachment. Cys21 carries S-diacylglycerol cysteine lipidation.

The protein belongs to the bacterial solute-binding protein 3 family. As to quaternary structure, the complex is composed of two ATP-binding proteins (TcyN), two transmembrane proteins (TcyL and TcyM) and two solute-binding proteins (TcyJ and TcyK).

It is found in the cell membrane. In terms of biological role, part of the ABC transporter complex TcyJKLMN involved in L-cystine import. Is also involved in cystathionine, djenkolate, and S-methylcysteine transport. This chain is L-cystine-binding protein TcyK (tcyK), found in Bacillus subtilis (strain 168).